A 311-amino-acid chain; its full sequence is MTKTIMLANPRGFCAGVDRAIAIVERAIELYGAPIYVRHEVVHNRFVVDDLRGKGAVFIEELKDVPPGSTLIYSAHGVPLSVRAEAEALGLTVFDATCPLVTKVHVEVKRMNKAGMEIIMIGHAGHPEVEGTMGQVDAGIYLVQTVDDVATLRVVNEDQLSYVSQTTLSVDETRDIIAALKARFPNIHSPKKDDICYATQNRQDAVKLLADQCDIVVVVGSPNSSNSNRLREVAALKGVDAYMVDNASLLEPEWFAGKRRVGVTAGASAPEVLVQAVIDRIKAFDVTQVTELPGVEESTVFALPPALRPLF.

Residue Cys-14 coordinates [4Fe-4S] cluster. Residues His-43 and His-76 each coordinate (2E)-4-hydroxy-3-methylbut-2-enyl diphosphate. Dimethylallyl diphosphate contacts are provided by His-43 and His-76. Isopentenyl diphosphate-binding residues include His-43 and His-76. Cys-98 is a binding site for [4Fe-4S] cluster. His-126 contributes to the (2E)-4-hydroxy-3-methylbut-2-enyl diphosphate binding site. Residue His-126 participates in dimethylallyl diphosphate binding. His-126 serves as a coordination point for isopentenyl diphosphate. Residue Glu-128 is the Proton donor of the active site. Thr-166 serves as a coordination point for (2E)-4-hydroxy-3-methylbut-2-enyl diphosphate. Residue Cys-196 participates in [4Fe-4S] cluster binding. (2E)-4-hydroxy-3-methylbut-2-enyl diphosphate is bound by residues Ser-224, Ser-225, Asn-226, and Ser-268. Dimethylallyl diphosphate-binding residues include Ser-224, Ser-225, Asn-226, and Ser-268. Residues Ser-224, Ser-225, Asn-226, and Ser-268 each contribute to the isopentenyl diphosphate site.

Belongs to the IspH family. It depends on [4Fe-4S] cluster as a cofactor.

It carries out the reaction isopentenyl diphosphate + 2 oxidized [2Fe-2S]-[ferredoxin] + H2O = (2E)-4-hydroxy-3-methylbut-2-enyl diphosphate + 2 reduced [2Fe-2S]-[ferredoxin] + 2 H(+). The enzyme catalyses dimethylallyl diphosphate + 2 oxidized [2Fe-2S]-[ferredoxin] + H2O = (2E)-4-hydroxy-3-methylbut-2-enyl diphosphate + 2 reduced [2Fe-2S]-[ferredoxin] + 2 H(+). It participates in isoprenoid biosynthesis; dimethylallyl diphosphate biosynthesis; dimethylallyl diphosphate from (2E)-4-hydroxy-3-methylbutenyl diphosphate: step 1/1. It functions in the pathway isoprenoid biosynthesis; isopentenyl diphosphate biosynthesis via DXP pathway; isopentenyl diphosphate from 1-deoxy-D-xylulose 5-phosphate: step 6/6. In terms of biological role, catalyzes the conversion of 1-hydroxy-2-methyl-2-(E)-butenyl 4-diphosphate (HMBPP) into a mixture of isopentenyl diphosphate (IPP) and dimethylallyl diphosphate (DMAPP). Acts in the terminal step of the DOXP/MEP pathway for isoprenoid precursor biosynthesis. The sequence is that of 4-hydroxy-3-methylbut-2-enyl diphosphate reductase from Chromobacterium violaceum (strain ATCC 12472 / DSM 30191 / JCM 1249 / CCUG 213 / NBRC 12614 / NCIMB 9131 / NCTC 9757 / MK).